The sequence spans 68 residues: Large ribosomal subunit protein bL31 (68 aa).

The Zn(2+) site is built by Cys-16, Cys-18, Cys-37, and Cys-40.

The protein belongs to the bacterial ribosomal protein bL31 family. Type A subfamily. As to quaternary structure, part of the 50S ribosomal subunit. It depends on Zn(2+) as a cofactor.

Binds the 23S rRNA. This chain is Large ribosomal subunit protein bL31, found in Nitrosococcus oceani (strain ATCC 19707 / BCRC 17464 / JCM 30415 / NCIMB 11848 / C-107).